The chain runs to 73 residues: Translation initiation factor IF-1 (73 aa).

Residues methionine 1–isoleucine 72 form the S1-like domain.

It belongs to the IF-1 family. In terms of assembly, component of the 30S ribosomal translation pre-initiation complex which assembles on the 30S ribosome in the order IF-2 and IF-3, IF-1 and N-formylmethionyl-tRNA(fMet); mRNA recruitment can occur at any time during PIC assembly.

It is found in the cytoplasm. One of the essential components for the initiation of protein synthesis. Stabilizes the binding of IF-2 and IF-3 on the 30S subunit to which N-formylmethionyl-tRNA(fMet) subsequently binds. Helps modulate mRNA selection, yielding the 30S pre-initiation complex (PIC). Upon addition of the 50S ribosomal subunit IF-1, IF-2 and IF-3 are released leaving the mature 70S translation initiation complex. The sequence is that of Translation initiation factor IF-1 from Lactobacillus acidophilus (strain ATCC 700396 / NCK56 / N2 / NCFM).